The sequence spans 621 residues: CEP295 N-terminal-like protein (621 aa).

The segment at 142–253 is disordered; the sequence is GGRARENEPD…RSKGADLERS (112 aa). A compositionally biased stretch (basic residues) spans 159 to 170; that stretch reads RSARPPRAKEKH. Over residues 171-185 the composition is skewed to basic and acidic residues; the sequence is RAALSEERSCREELG. Polar residues predominate over residues 203–213; it reads KPQTTKATGRM. Basic and acidic residues predominate over residues 219–229; the sequence is PPEKRKGRPEP. A coiled-coil region spans residues 328–359; the sequence is QCTLREKNKWQKELELAFEELFNINRKLKKHL. 3 disordered regions span residues 385–421, 491–529, and 543–586; these read CGAGTPRGKKMADPEMLPAGEPRSPAEEEAQQAASKT, DQADRVGSTASRQRQKAEMEQRRQKQLESLEQMEHPDMS, and REQR…DRHS. The stretch at 498–525 forms a coiled coil; that stretch reads STASRQRQKAEMEQRRQKQLESLEQMEH. Residues 505 to 529 show a composition bias toward basic and acidic residues; that stretch reads QKAEMEQRRQKQLESLEQMEHPDMS. The span at 568-578 shows a compositional bias: polar residues; sequence ELSTTSPSGTS.

Its subcellular location is the cell projection. It localises to the cilium. The polypeptide is CEP295 N-terminal-like protein (Homo sapiens (Human)).